The following is an 880-amino-acid chain: Nonsense-mediated mRNA decay factor SMG7-like (880 aa).

TPR repeat units follow at residues 149–183 (QEQYLKAHEHPNWSTAATYYLEAAKSWPDSGNPHN) and 184–217 (QLAVLATYVSDELLALYHCVRSLAVKEPFPGASN). The segment at 669 to 711 (RLGLSKPNGLGPIDETGPVSAFDSLSINSSTEHPASSYSPPTP) is disordered. Over residues 691-701 (DSLSINSSTEH) the composition is skewed to polar residues.

May play a role in growth and development. The protein is Nonsense-mediated mRNA decay factor SMG7-like of Arabidopsis thaliana (Mouse-ear cress).